We begin with the raw amino-acid sequence, 605 residues long: Arginine--tRNA ligase (605 aa).

Residues 131-141 carry the 'HIGH' region motif; it reads ANPTGPMHVGH. The disordered stretch occupies residues 290 to 309; it reads PPPKSKKGQPAPAQAASNSA. Residues 298–309 show a composition bias toward low complexity; that stretch reads QPAPAQAASNSA.

Belongs to the class-I aminoacyl-tRNA synthetase family. In terms of assembly, monomer.

The protein resides in the cytoplasm. It carries out the reaction tRNA(Arg) + L-arginine + ATP = L-arginyl-tRNA(Arg) + AMP + diphosphate. This is Arginine--tRNA ligase from Anaeromyxobacter sp. (strain Fw109-5).